Here is a 104-residue protein sequence, read N- to C-terminus: UPF0045 protein YqgV (104 aa).

This sequence belongs to the UPF0045 family.

The protein is UPF0045 protein YqgV (yqgV) of Bacillus subtilis (strain 168).